Reading from the N-terminus, the 192-residue chain is Dihydrofolate reductase (192 aa).

Residues 5-191 (NVAIIVAALK…FTYNYTLWTR (187 aa)) form the DHFR domain. NADP(+) is bound by residues Ala-11 and 18–24 (GIGYKGK). 32–37 (EIRYFK) provides a ligand contact to substrate. 56-58 (RKT) provides a ligand contact to NADP(+). A substrate-binding site is contributed by Arg-72. An NADP(+)-binding site is contributed by 78–80 (SRS). Residues Ile-112 and Tyr-118 each coordinate substrate. 113–120 (GGAEIYNE) lines the NADP(+) pocket.

It belongs to the dihydrofolate reductase family.

It carries out the reaction (6S)-5,6,7,8-tetrahydrofolate + NADP(+) = 7,8-dihydrofolate + NADPH + H(+). It functions in the pathway cofactor biosynthesis; tetrahydrofolate biosynthesis; 5,6,7,8-tetrahydrofolate from 7,8-dihydrofolate: step 1/1. In terms of biological role, key enzyme in folate metabolism. Catalyzes an essential reaction for de novo glycine and purine synthesis, and for DNA precursor synthesis. This is Dihydrofolate reductase (DFR1) from Candida albicans (Yeast).